We begin with the raw amino-acid sequence, 341 residues long: Methionine import ATP-binding protein MetN 3 (341 aa).

The ABC transporter domain occupies 2–241; the sequence is ILLENVKKIY…PKQDITKRFV (240 aa). Residue 38–45 coordinates ATP; the sequence is GYSGAGKS.

The protein belongs to the ABC transporter superfamily. Methionine importer (TC 3.A.1.24) family. The complex is composed of two ATP-binding proteins (MetN), two transmembrane proteins (MetI) and a solute-binding protein (MetQ).

It is found in the cell membrane. It catalyses the reaction L-methionine(out) + ATP + H2O = L-methionine(in) + ADP + phosphate + H(+). The enzyme catalyses D-methionine(out) + ATP + H2O = D-methionine(in) + ADP + phosphate + H(+). Part of the ABC transporter complex MetNIQ involved in methionine import. Responsible for energy coupling to the transport system. The chain is Methionine import ATP-binding protein MetN 3 from Bacillus cereus (strain ATCC 14579 / DSM 31 / CCUG 7414 / JCM 2152 / NBRC 15305 / NCIMB 9373 / NCTC 2599 / NRRL B-3711).